Here is a 388-residue protein sequence, read N- to C-terminus: Succinate--CoA ligase [ADP-forming] subunit beta (388 aa).

One can recognise an ATP-grasp domain in the interval 9–244 (KALFAEYGLP…PSQDDAREAH (236 aa)). Residues Lys46, 53–55 (GRG), Glu99, Thr102, and Glu107 each bind ATP. Positions 199 and 213 each coordinate Mg(2+). Substrate is bound by residues Asn264 and 321–323 (GIV).

Belongs to the succinate/malate CoA ligase beta subunit family. Heterotetramer of two alpha and two beta subunits. The cofactor is Mg(2+).

It catalyses the reaction succinate + ATP + CoA = succinyl-CoA + ADP + phosphate. It carries out the reaction GTP + succinate + CoA = succinyl-CoA + GDP + phosphate. The protein operates within carbohydrate metabolism; tricarboxylic acid cycle; succinate from succinyl-CoA (ligase route): step 1/1. In terms of biological role, succinyl-CoA synthetase functions in the citric acid cycle (TCA), coupling the hydrolysis of succinyl-CoA to the synthesis of either ATP or GTP and thus represents the only step of substrate-level phosphorylation in the TCA. The beta subunit provides nucleotide specificity of the enzyme and binds the substrate succinate, while the binding sites for coenzyme A and phosphate are found in the alpha subunit. This is Succinate--CoA ligase [ADP-forming] subunit beta from Shewanella halifaxensis (strain HAW-EB4).